The chain runs to 312 residues: 4-hydroxy-3-methylbut-2-enyl diphosphate reductase (312 aa).

Cys14 contributes to the [4Fe-4S] cluster binding site. The (2E)-4-hydroxy-3-methylbut-2-enyl diphosphate site is built by His43 and His76. His43 and His76 together coordinate dimethylallyl diphosphate. 2 residues coordinate isopentenyl diphosphate: His43 and His76. Residue Cys98 participates in [4Fe-4S] cluster binding. His125 serves as a coordination point for (2E)-4-hydroxy-3-methylbut-2-enyl diphosphate. A dimethylallyl diphosphate-binding site is contributed by His125. Residue His125 coordinates isopentenyl diphosphate. The active-site Proton donor is the Glu127. A (2E)-4-hydroxy-3-methylbut-2-enyl diphosphate-binding site is contributed by Thr165. Residue Cys195 coordinates [4Fe-4S] cluster. Ser223, Ser224, Asn225, and Ser269 together coordinate (2E)-4-hydroxy-3-methylbut-2-enyl diphosphate. Dimethylallyl diphosphate-binding residues include Ser223, Ser224, Asn225, and Ser269. 4 residues coordinate isopentenyl diphosphate: Ser223, Ser224, Asn225, and Ser269.

Belongs to the IspH family. Requires [4Fe-4S] cluster as cofactor.

The catalysed reaction is isopentenyl diphosphate + 2 oxidized [2Fe-2S]-[ferredoxin] + H2O = (2E)-4-hydroxy-3-methylbut-2-enyl diphosphate + 2 reduced [2Fe-2S]-[ferredoxin] + 2 H(+). It catalyses the reaction dimethylallyl diphosphate + 2 oxidized [2Fe-2S]-[ferredoxin] + H2O = (2E)-4-hydroxy-3-methylbut-2-enyl diphosphate + 2 reduced [2Fe-2S]-[ferredoxin] + 2 H(+). It functions in the pathway isoprenoid biosynthesis; dimethylallyl diphosphate biosynthesis; dimethylallyl diphosphate from (2E)-4-hydroxy-3-methylbutenyl diphosphate: step 1/1. It participates in isoprenoid biosynthesis; isopentenyl diphosphate biosynthesis via DXP pathway; isopentenyl diphosphate from 1-deoxy-D-xylulose 5-phosphate: step 6/6. Catalyzes the conversion of 1-hydroxy-2-methyl-2-(E)-butenyl 4-diphosphate (HMBPP) into a mixture of isopentenyl diphosphate (IPP) and dimethylallyl diphosphate (DMAPP). Acts in the terminal step of the DOXP/MEP pathway for isoprenoid precursor biosynthesis. The chain is 4-hydroxy-3-methylbut-2-enyl diphosphate reductase from Leptospira interrogans serogroup Icterohaemorrhagiae serovar copenhageni (strain Fiocruz L1-130).